Consider the following 199-residue polypeptide: Probable thymidylate kinase (199 aa).

9 to 16 (GIDGCGKT) serves as a coordination point for ATP.

This sequence belongs to the thymidylate kinase family.

The catalysed reaction is dTMP + ATP = dTDP + ADP. This is Probable thymidylate kinase from Methanococcus maripaludis (strain DSM 14266 / JCM 13030 / NBRC 101832 / S2 / LL).